The sequence spans 337 residues: Ribosomal RNA small subunit methyltransferase H (337 aa).

S-adenosyl-L-methionine is bound by residues 45-47, D64, F91, D120, and Q127; that span reads GGH.

The protein belongs to the methyltransferase superfamily. RsmH family.

The protein resides in the cytoplasm. The catalysed reaction is cytidine(1402) in 16S rRNA + S-adenosyl-L-methionine = N(4)-methylcytidine(1402) in 16S rRNA + S-adenosyl-L-homocysteine + H(+). In terms of biological role, specifically methylates the N4 position of cytidine in position 1402 (C1402) of 16S rRNA. The chain is Ribosomal RNA small subunit methyltransferase H from Corynebacterium glutamicum (strain R).